Consider the following 59-residue polypeptide: Cecropin-A1 (59 aa).

A signal peptide spans 1-23 (MNFTKLFAIVLLAALVLLGQTEA).

The protein belongs to the cecropin family.

The protein localises to the secreted. Cecropins have lytic and antibacterial activity against several Gram-positive and Gram-negative bacteria. This is Cecropin-A1 (CECA1) from Aedes albopictus (Asian tiger mosquito).